The following is a 213-amino-acid chain: Putative amidate substrates transporter protein (213 aa).

6 consecutive transmembrane segments (helical) span residues 4-20, 32-48, 56-72, 116-132, 146-162, and 172-188; these read VGLF…GLML, LNFF…TVLI, AVIF…FTYL, VIWL…FLLL, VAVA…AFLI, and LPAA…VVLA.

This sequence belongs to the AmiS/UreI family.

The protein resides in the cell membrane. In terms of biological role, possible transporter that might be responsible for the adsorption of amidase substrates or release of their hydrolysis products. The protein is Putative amidate substrates transporter protein of Mycolicibacterium smegmatis (Mycobacterium smegmatis).